A 315-amino-acid polypeptide reads, in one-letter code: ADP-L-glycero-D-manno-heptose-6-epimerase (315 aa).

NADP(+) is bound by residues 10 to 11, 31 to 32, K38, K53, 76 to 80, and N93; these read FI, DD, and QGACS. Y140 acts as the Proton acceptor in catalysis. K144 lines the NADP(+) pocket. N169 contacts substrate. Residues V170 and K178 each coordinate NADP(+). The active-site Proton acceptor is K178. Residues S180, H187, 201–204, R214, and Y278 contribute to the substrate site; that span reads FEGC.

The protein belongs to the NAD(P)-dependent epimerase/dehydratase family. HldD subfamily. As to quaternary structure, homopentamer. Requires NADP(+) as cofactor.

It carries out the reaction ADP-D-glycero-beta-D-manno-heptose = ADP-L-glycero-beta-D-manno-heptose. The protein operates within nucleotide-sugar biosynthesis; ADP-L-glycero-beta-D-manno-heptose biosynthesis; ADP-L-glycero-beta-D-manno-heptose from D-glycero-beta-D-manno-heptose 7-phosphate: step 4/4. Catalyzes the interconversion between ADP-D-glycero-beta-D-manno-heptose and ADP-L-glycero-beta-D-manno-heptose via an epimerization at carbon 6 of the heptose. The polypeptide is ADP-L-glycero-D-manno-heptose-6-epimerase (Syntrophotalea carbinolica (strain DSM 2380 / NBRC 103641 / GraBd1) (Pelobacter carbinolicus)).